The chain runs to 476 residues: Ribulose bisphosphate carboxylase large chain (476 aa).

2 residues coordinate substrate: N124 and T174. K176 functions as the Proton acceptor in the catalytic mechanism. K178 serves as a coordination point for substrate. Mg(2+) is bound by residues K202, D204, and E205. K202 carries the post-translational modification N6-carboxylysine. The Proton acceptor role is filled by H295. Residues R296, H328, and S380 each coordinate substrate.

The protein belongs to the RuBisCO large chain family. Type I subfamily. As to quaternary structure, heterohexadecamer of 8 large chains and 8 small chains; disulfide-linked. The disulfide link is formed within the large subunit homodimers. Requires Mg(2+) as cofactor. In terms of processing, the disulfide bond which can form in the large chain dimeric partners within the hexadecamer appears to be associated with oxidative stress and protein turnover.

The protein resides in the carboxysome. The catalysed reaction is 2 (2R)-3-phosphoglycerate + 2 H(+) = D-ribulose 1,5-bisphosphate + CO2 + H2O. The enzyme catalyses D-ribulose 1,5-bisphosphate + O2 = 2-phosphoglycolate + (2R)-3-phosphoglycerate + 2 H(+). RuBisCO catalyzes two reactions: the carboxylation of D-ribulose 1,5-bisphosphate, the primary event in carbon dioxide fixation, as well as the oxidative fragmentation of the pentose substrate in the photorespiration process. Both reactions occur simultaneously and in competition at the same active site. This is Ribulose bisphosphate carboxylase large chain from Nostoc punctiforme (strain ATCC 29133 / PCC 73102).